Here is a 191-residue protein sequence, read N- to C-terminus: MNTVLKILMAGVDEVGRGPLAGAVVTAAVILKKPIDGLTDSKKLSPKQRNLLAIRIKEEALAFAYGRAEVEEIDQLNIHHATLLAMRRAVEALPIQPDNVFVDGAFTPQLNIPCKAIVQGDSLIPEISAASILAKVLRDEEMVALDKIYPGYGFAEHKGYATPVHKEALMRLGPCKIHRRSYSPVADLISK.

An RNase H type-2 domain is found at 7–191 (ILMAGVDEVG…YSPVADLISK (185 aa)). Residues D13, E14, and D103 each coordinate a divalent metal cation.

Belongs to the RNase HII family. The cofactor is Mn(2+). It depends on Mg(2+) as a cofactor.

The protein resides in the cytoplasm. It carries out the reaction Endonucleolytic cleavage to 5'-phosphomonoester.. Its function is as follows. Endonuclease that specifically degrades the RNA of RNA-DNA hybrids. The protein is Ribonuclease HII of Legionella pneumophila subsp. pneumophila (strain Philadelphia 1 / ATCC 33152 / DSM 7513).